We begin with the raw amino-acid sequence, 394 residues long: Immune-associated nucleotide-binding protein 12 (394 aa).

The region spanning 45 to 251 is the AIG1-type G domain; the sequence is KPARTLLLVG…YMADLSHEIR (207 aa). Positions 54 to 61 are G1; that stretch reads GRSGNGKS. GTP-binding positions include 54 to 62 and S75; that span reads GRSGNGKSA. The segment at 81–85 is G2; the sequence is GVTTA. The G3 stretch occupies residues 103–106; the sequence is DTPG. The G4 stretch occupies residues 173-176; sequence TNED. Positions 210–212 are G5; that stretch reads RNR. N211 is a binding site for GTP. Residues 289-387 are a coiled coil; sequence NQQLRQMMER…KQMATDLQKS (99 aa).

It belongs to the TRAFAC class TrmE-Era-EngA-EngB-Septin-like GTPase superfamily. AIG1/Toc34/Toc159-like paraseptin GTPase family. IAN subfamily.

The chain is Immune-associated nucleotide-binding protein 12 from Arabidopsis thaliana (Mouse-ear cress).